The chain runs to 346 residues: Glycerol-1-phosphate dehydrogenase [NAD(P)+] (346 aa).

NAD(+) is bound by residues 93–97 and 115–118; these read GSIID and TTAS. Aspartate 120 provides a ligand contact to substrate. Serine 124 is a binding site for NAD(+). Aspartate 167 contributes to the substrate binding site. Zn(2+)-binding residues include aspartate 167 and histidine 247. Histidine 251 contacts substrate. Residue histidine 263 coordinates Zn(2+).

Belongs to the glycerol-1-phosphate dehydrogenase family. Zn(2+) is required as a cofactor.

Its subcellular location is the cytoplasm. It carries out the reaction sn-glycerol 1-phosphate + NAD(+) = dihydroxyacetone phosphate + NADH + H(+). It catalyses the reaction sn-glycerol 1-phosphate + NADP(+) = dihydroxyacetone phosphate + NADPH + H(+). It functions in the pathway membrane lipid metabolism; glycerophospholipid metabolism. Its function is as follows. Catalyzes the NAD(P)H-dependent reduction of dihydroxyacetonephosphate (DHAP or glycerone phosphate) to glycerol 1-phosphate (G1P). The G1P thus generated is used as the glycerophosphate backbone of phospholipids in the cellular membranes of Archaea. This is Glycerol-1-phosphate dehydrogenase [NAD(P)+] from Pyrococcus abyssi (strain GE5 / Orsay).